Reading from the N-terminus, the 741-residue chain is 1,4-alpha-glucan branching enzyme GlgB (741 aa).

Aspartate 420 serves as the catalytic Nucleophile. The Proton donor role is filled by glutamate 473.

The protein belongs to the glycosyl hydrolase 13 family. GlgB subfamily. In terms of assembly, monomer.

It catalyses the reaction Transfers a segment of a (1-&gt;4)-alpha-D-glucan chain to a primary hydroxy group in a similar glucan chain.. It functions in the pathway glycan biosynthesis; glycogen biosynthesis. Catalyzes the formation of the alpha-1,6-glucosidic linkages in glycogen by scission of a 1,4-alpha-linked oligosaccharide from growing alpha-1,4-glucan chains and the subsequent attachment of the oligosaccharide to the alpha-1,6 position. The polypeptide is 1,4-alpha-glucan branching enzyme GlgB (Pseudomonas syringae pv. syringae (strain B728a)).